The primary structure comprises 777 residues: Glucocorticoid receptor (777 aa).

Residues 1–14 are compositionally biased toward basic and acidic residues; sequence MDSKESLTPGKEEN. The disordered stretch occupies residues 1-21; sequence MDSKESLTPGKEENPSSVLTQ. The segment at 1–420 is modulating; sequence MDSKESLTPG…TATTGPPPKL (420 aa). T8 carries the phosphothreonine modification. R23 is subject to Omega-N-methylarginine. A phosphoserine mark is found at S45, S113, S134, and S141. Positions 130–182 are disordered; sequence NRSTSVPENPKSSASSSVSAAPKEKEFPKTHSDVSSEQQNLKGQTGTNGGNVK. A compositionally biased stretch (low complexity) spans 134-150; the sequence is SVPENPKSSASSSVSAA. Residues 151 to 163 show a composition bias toward basic and acidic residues; that stretch reads PKEKEFPKTHSDV. A compositionally biased stretch (polar residues) spans 164–174; sequence SSEQQNLKGQT. Phosphoserine occurs at positions 203, 211, and 226. K258 participates in a covalent cross-link: Glycyl lysine isopeptide (Lys-Gly) (interchain with G-Cter in SUMO2). S267 is modified (phosphoserine). Glycyl lysine isopeptide (Lys-Gly) (interchain with G-Cter in SUMO); alternate cross-links involve residues K277 and K293. Residues K277 and K293 each participate in a glycyl lysine isopeptide (Lys-Gly) (interchain with G-Cter in SUMO2); alternate cross-link. Residues 394-414 show a composition bias toward low complexity; it reads SSPSMRPDVSSPPSSSSTATT. The interval 394–415 is disordered; sequence SSPSMRPDVSSPPSSSSTATTG. At S404 the chain carries Phosphoserine. Residue K419 forms a Glycyl lysine isopeptide (Lys-Gly) (interchain with G-Cter in ubiquitin) linkage. 2 consecutive NR C4-type zinc fingers follow at residues 421 to 441 and 457 to 481; these read CLVC…CGSC and CAGR…YRKC. Positions 421–486 form a DNA-binding region, nuclear receptor; it reads CLVCSDEASG…RYRKCLQAGM (66 aa). N6-acetyllysine is present on residues K480, K492, K494, and K495. An interaction with CLOCK region spans residues 485-777; the sequence is GMNLEARKTK…NIKKLLFHQK (293 aa). Positions 487-523 are hinge; that stretch reads NLEARKTKKKIKGIQQATTGVSQETSENPANKTIVPA. One can recognise an NR LBD domain in the interval 524-758; sequence TLPQLTPTLV…FPEMLAEIIT (235 aa). Residues 532–697 are interaction with CRY1; it reads LVSLLEVIEP…EIRMTYIKEL (166 aa). A Glycyl lysine isopeptide (Lys-Gly) (interchain with G-Cter in SUMO) cross-link involves residue K703.

This sequence belongs to the nuclear hormone receptor family. NR3 subfamily. As to quaternary structure, heteromultimeric cytoplasmic complex with HSP90AA1, HSPA1A/HSPA1B, and FKBP5 or another immunophilin such as PPID, STIP1, or the immunophilin homolog PPP5C. Upon ligand binding FKBP5 dissociates from the complex and FKBP4 takes its place, thereby linking the complex to dynein and mediating transport to the nucleus, where the complex dissociates. Probably forms a complex composed of chaperones HSP90 and HSP70, co-chaperones CDC37, PPP5C, TSC1 and client protein TSC2, CDK4, AKT, RAF1 and NR3C1; this complex does not contain co-chaperones STIP1/HOP and PTGES3/p23. Directly interacts with UNC45A. Binds to DNA as a homodimer, and as heterodimer with NR3C2 or the retinoid X receptor. Binds STAT5A and STAT5B homodimers and heterodimers. Interacts with NRIP1, POU2F1, POU2F2 and TRIM28. Interacts with several coactivator complexes, including the SMARCA4 complex, CREBBP/EP300, TADA2L (Ada complex) and p160 coactivators such as NCOA2 and NCOA6. Interaction with BAG1 inhibits transactivation. Interacts with HEXIM1 and TGFB1I1. Interacts with NCOA1. Interacts with NCOA3, SMARCA4, SMARCC1, SMARCD1, and SMARCE1. Interacts with CLOCK, CRY1 and CRY2 in a ligand-dependent fashion. Interacts with CIART. Interacts with RWDD3. Interacts with UBE2I/UBC9 and this interaction is enhanced in the presence of RWDD3. Interacts with GRIP1. Interacts with NR4A3 (via nuclear receptor DNA-binding domain), represses transcription activity of NR4A3 on the POMC promoter Nur response element (NurRE). Directly interacts with PNRC2 to attract and form a complex with UPF1 and DCP1A; the interaction leads to rapid mRNA degradation. Interacts with GSK3B. Interacts with FNIP1 and FNIP2. Interacts (via C-terminus) with HNRNPU (via C-terminus). Interacts with MCM3AP. Interacts (via domain NR LBD) with HSP90AA1 and HSP90AB1. In the absence of hormonal ligand, interacts with TACC1. Interacts (via NR LBD domain) with ZNF764 (via KRAB domain); the interaction regulates transcription factor activity of NR3C1 by directing its actions toward certain biologic pathways. Acetylation by CLOCK reduces its binding to glucocorticoid response elements and its transcriptional activity. In terms of processing, increased proteasome-mediated degradation in response to glucocorticoids. Post-translationally, phosphorylated in the absence of hormone; becomes hyperphosphorylated in the presence of glucocorticoid. The Ser-203, Ser-226 and Ser-404-phosphorylated forms are mainly cytoplasmic, and the Ser-211-phosphorylated form is nuclear. Phosphorylation at Ser-211 increases transcriptional activity. Phosphorylation at Ser-203, Ser-226 and Ser-404 decreases signaling capacity. Phosphorylation at Ser-404 may protect from glucocorticoid-induced apoptosis. Phosphorylation at Ser-203 and Ser-211 is not required in regulation of chromosome segregation. May be dephosphorylated by PPP5C, attenuates NR3C1 action. Ubiquitinated by UBR5, leading to its degradation: UBR5 specifically recognizes and binds ligand-bound NR3C1 when it is not associated with coactivators (NCOAs). In presence of NCOAs, the UBR5-degron is not accessible, preventing its ubiquitination and degradation. In terms of processing, sumoylation at Lys-277 and Lys-293 negatively regulates its transcriptional activity. Sumoylation at Lys-703 positively regulates its transcriptional activity in the presence of RWDD3. Sumoylation at Lys-277 and Lys-293 is dispensable whereas sumoylation at Lys-703 is critical for the stimulatory effect of RWDD3 on its transcriptional activity. Heat shock increases sumoylation in a RWDD3-dependent manner. As to expression, within the infant and adult hippocampal formation, highest expression observed in the DG granule cell layer with moderate levels in the DG hilus, the CA2-CA4 pyramidal cell layer and the proximal part of the CA1 pyramidal cell layer. Moderate to high expression levels found in the presubiculum and in its' superficial layers. Weak but specific expression detected throughout the entire corticle mantle. In the amygdala, moderate levels were detected in the lateral, central and medial nuclei. Moderate expression levels were present in the PVNh alongside the third ventricle.

The protein resides in the cytoplasm. It localises to the nucleus. Its subcellular location is the mitochondrion. It is found in the cytoskeleton. The protein localises to the spindle. The protein resides in the microtubule organizing center. It localises to the centrosome. Its subcellular location is the chromosome. It is found in the nucleoplasm. In terms of biological role, receptor for glucocorticoids (GC). Has a dual mode of action: as a transcription factor that binds to glucocorticoid response elements (GRE), both for nuclear and mitochondrial DNA, and as a modulator of other transcription factors. Affects inflammatory responses, cellular proliferation and differentiation in target tissues. Involved in chromatin remodeling. Plays a role in rapid mRNA degradation by binding to the 5' UTR of target mRNAs and interacting with PNRC2 in a ligand-dependent manner which recruits the RNA helicase UPF1 and the mRNA-decapping enzyme DCP1A, leading to RNA decay. Could act as a coactivator for STAT5-dependent transcription upon growth hormone (GH) stimulation and could reveal an essential role of hepatic GR in the control of body growth. Mediates glucocorticoid-induced apoptosis. Promotes accurate chromosome segregation during mitosis. May act as a tumor suppressor. May play a negative role in adipogenesis through the regulation of lipolytic and antilipogenic gene expression. This chain is Glucocorticoid receptor (NR3C1), found in Callithrix jacchus (White-tufted-ear marmoset).